The following is a 176-amino-acid chain: ATP-dependent protease subunit HslV (176 aa).

Thr5 is a catalytic residue. Na(+)-binding residues include Ala161, Cys164, and Thr167.

The protein belongs to the peptidase T1B family. HslV subfamily. A double ring-shaped homohexamer of HslV is capped on each side by a ring-shaped HslU homohexamer. The assembly of the HslU/HslV complex is dependent on binding of ATP.

It is found in the cytoplasm. It carries out the reaction ATP-dependent cleavage of peptide bonds with broad specificity.. Allosterically activated by HslU binding. Protease subunit of a proteasome-like degradation complex believed to be a general protein degrading machinery. This is ATP-dependent protease subunit HslV from Caldicellulosiruptor bescii (strain ATCC BAA-1888 / DSM 6725 / KCTC 15123 / Z-1320) (Anaerocellum thermophilum).